The primary structure comprises 340 residues: Phosphate acyltransferase (340 aa).

This sequence belongs to the PlsX family. Homodimer. Probably interacts with PlsY.

Its subcellular location is the cytoplasm. The catalysed reaction is a fatty acyl-[ACP] + phosphate = an acyl phosphate + holo-[ACP]. It functions in the pathway lipid metabolism; phospholipid metabolism. Catalyzes the reversible formation of acyl-phosphate (acyl-PO(4)) from acyl-[acyl-carrier-protein] (acyl-ACP). This enzyme utilizes acyl-ACP as fatty acyl donor, but not acyl-CoA. This is Phosphate acyltransferase from Marinobacter nauticus (strain ATCC 700491 / DSM 11845 / VT8) (Marinobacter aquaeolei).